A 425-amino-acid polypeptide reads, in one-letter code: 3-phosphoshikimate 1-carboxyvinyltransferase (425 aa).

The 3-phosphoshikimate site is built by Lys-20, Ser-21, and Arg-25. Phosphoenolpyruvate is bound at residue Lys-20. Residues Gly-92 and Arg-120 each coordinate phosphoenolpyruvate. 3-phosphoshikimate contacts are provided by Ser-165, Gln-167, Asp-312, and Lys-339. Residue Gln-167 participates in phosphoenolpyruvate binding. Asp-312 (proton acceptor) is an active-site residue. 2 residues coordinate phosphoenolpyruvate: Arg-343 and Arg-385.

This sequence belongs to the EPSP synthase family. Monomer.

The protein resides in the cytoplasm. It catalyses the reaction 3-phosphoshikimate + phosphoenolpyruvate = 5-O-(1-carboxyvinyl)-3-phosphoshikimate + phosphate. Its pathway is metabolic intermediate biosynthesis; chorismate biosynthesis; chorismate from D-erythrose 4-phosphate and phosphoenolpyruvate: step 6/7. Functionally, catalyzes the transfer of the enolpyruvyl moiety of phosphoenolpyruvate (PEP) to the 5-hydroxyl of shikimate-3-phosphate (S3P) to produce enolpyruvyl shikimate-3-phosphate and inorganic phosphate. The chain is 3-phosphoshikimate 1-carboxyvinyltransferase from Alkaliphilus metalliredigens (strain QYMF).